A 389-amino-acid chain; its full sequence is P2X purinoceptor 6 (389 aa).

Residues 1 to 45 lie on the Cytoplasmic side of the membrane; it reads MQLQPAGTGNMASAAAAALVSWGFLDYKTEKYVLTRNCRVGVSQR. The helical transmembrane segment at 46–66 threads the bilayer; sequence LLQLAVVVYVIGWALLAKKGY. Topologically, residues 67 to 335 are extracellular; the sequence is QERDLAPQTS…LVTGQAGKFA (269 aa). 3 cysteine pairs are disulfide-bonded: cysteine 129/cysteine 179, cysteine 140/cysteine 163, and cysteine 146/cysteine 173. N-linked (GlcNAc...) asparagine glycosylation is found at asparagine 167, asparagine 197, and asparagine 212. 2 disulfide bridges follow: cysteine 230/cysteine 240 and cysteine 274/cysteine 283. Residues 336-356 form a helical membrane-spanning segment; it reads LIPTAITVGTGAAWLGMVTFL. Residues 357 to 389 lie on the Cytoplasmic side of the membrane; it reads CDLLLLYVDREAGFYWRTKYEEARAPKTTTNSS.

It belongs to the P2X receptor family. Unlike most P2RXs, P2RX6 does not seem to form homotrimers. P2RX6 are likely to form as obligate heteromers with other P2RXs subunits. Forms heterotrimer with P2RX2 with a variable subunit stoichiometry determined by subunit expression levels. Forms heterotrimer with P2RX4; functional differences between homomeric P2RX4 and P2RX4/6 heterotrimer are minor. Forms a P2RX2/P2RX4/P2RX6 heterotrimer. Interacts with SF3A1; resulting in a reduction of the splicing activity. N-glycosylated. N-linked glycosylation can affect trafficking to the membrane and function. In terms of tissue distribution, predominantly expressed in skeletal muscle. Also expressed in lung.

The protein resides in the cell membrane. It is found in the endoplasmic reticulum. The protein localises to the nucleus. It localises to the nucleus inner membrane. The catalysed reaction is Ca(2+)(in) = Ca(2+)(out). Its function is as follows. Acts as a modulatory subunit rather than a functional channel. Unlike other P2XRs members, P2RX6 does not seem to form functional homotrimers. P2RX6 requires the presence of P2RX4 or P2RX2 to form functional heterotrimeric receptors at the plasma membrane. P2RX6 can be translocated to the nucleus, where it interacts with the splicing factor (SF3A1), to reduce the incidence of mRNA splicing. May function as a nuclear regulator of post-transcriptional modifications in neurons. In Mus musculus (Mouse), this protein is P2X purinoceptor 6 (P2rx6).